The chain runs to 267 residues: 4-diphosphocytidyl-2-C-methyl-D-erythritol kinase (267 aa).

Residue Lys8 is part of the active site. 90 to 100 (PIGAGLGGGSS) serves as a coordination point for ATP. Asp132 is a catalytic residue.

It belongs to the GHMP kinase family. IspE subfamily.

It carries out the reaction 4-CDP-2-C-methyl-D-erythritol + ATP = 4-CDP-2-C-methyl-D-erythritol 2-phosphate + ADP + H(+). The protein operates within isoprenoid biosynthesis; isopentenyl diphosphate biosynthesis via DXP pathway; isopentenyl diphosphate from 1-deoxy-D-xylulose 5-phosphate: step 3/6. Functionally, catalyzes the phosphorylation of the position 2 hydroxy group of 4-diphosphocytidyl-2C-methyl-D-erythritol. The chain is 4-diphosphocytidyl-2-C-methyl-D-erythritol kinase from Azobacteroides pseudotrichonymphae genomovar. CFP2.